A 339-amino-acid chain; its full sequence is Nicotinate-nucleotide--dimethylbenzimidazole phosphoribosyltransferase (339 aa).

The Proton acceptor role is filled by E306.

It belongs to the CobT family.

The enzyme catalyses 5,6-dimethylbenzimidazole + nicotinate beta-D-ribonucleotide = alpha-ribazole 5'-phosphate + nicotinate + H(+). The protein operates within nucleoside biosynthesis; alpha-ribazole biosynthesis; alpha-ribazole from 5,6-dimethylbenzimidazole: step 1/2. In terms of biological role, catalyzes the synthesis of alpha-ribazole-5'-phosphate from nicotinate mononucleotide (NAMN) and 5,6-dimethylbenzimidazole (DMB). This chain is Nicotinate-nucleotide--dimethylbenzimidazole phosphoribosyltransferase, found in Brucella anthropi (strain ATCC 49188 / DSM 6882 / CCUG 24695 / JCM 21032 / LMG 3331 / NBRC 15819 / NCTC 12168 / Alc 37) (Ochrobactrum anthropi).